A 302-amino-acid chain; its full sequence is MTSLNQRKDRLEFNKLQKRLRRQTGSAIVDYNMIEDGDKVMVCLSGGKDSYTMLDILLSLQQTAPIRFELVAVNMDQKQPGFPEHVLPNYLAQLGVPFHIIERDTYSIVKEVVPEGKTTCGLCSRLRRGTLYGFADEIGATKIALGHHRDDIIETLFLNMFYGGKLKAMPPKLLSDDKRNIVIRPLAYCAEEDIAEFARLKGFPIIPCNLCGSQENLQRQAVKEMLHAWERQFPGRTETIFTAIRNVQPSQLGDLELFDFVNLAIDKTATAVEDASDACAVPNWHRPAQEEVVQYVDVLDIH.

The PP-loop motif motif lies at 45-50 (SGGKDS). The [4Fe-4S] cluster site is built by Cys120, Cys123, and Cys211.

This sequence belongs to the TtcA family. As to quaternary structure, homodimer. Mg(2+) is required as a cofactor. The cofactor is [4Fe-4S] cluster.

Its subcellular location is the cytoplasm. It carries out the reaction cytidine(32) in tRNA + S-sulfanyl-L-cysteinyl-[cysteine desulfurase] + AH2 + ATP = 2-thiocytidine(32) in tRNA + L-cysteinyl-[cysteine desulfurase] + A + AMP + diphosphate + H(+). Its pathway is tRNA modification. In terms of biological role, catalyzes the ATP-dependent 2-thiolation of cytidine in position 32 of tRNA, to form 2-thiocytidine (s(2)C32). The sulfur atoms are provided by the cysteine/cysteine desulfurase (IscS) system. The polypeptide is tRNA-cytidine(32) 2-sulfurtransferase (Cellvibrio japonicus (strain Ueda107) (Pseudomonas fluorescens subsp. cellulosa)).